We begin with the raw amino-acid sequence, 59 residues long: Cecropin-C (59 aa).

Residues 1–23 (MNFKLIFLVALVLMAAFLGQTEG) form the signal peptide. V58 bears the Valine amide mark.

Belongs to the cecropin family.

The protein localises to the secreted. In terms of biological role, cecropins have lytic and antibacterial activity against several Gram-positive and Gram-negative bacteria. This chain is Cecropin-C (CecC), found in Anopheles gambiae (African malaria mosquito).